Consider the following 76-residue polypeptide: MAYICAXTLAFLLCVNTGIIQAEDKEYVSSEHMEFRESCIPQDGECDRMADACCPGLQCLGCNPLAAHDTGHCKCQ.

The N-terminal stretch at 1-22 (MAYICAXTLAFLLCVNTGIIQA) is a signal peptide.

This sequence belongs to the scoloptoxin-13 family. Contains 4 disulfide bonds. Expressed by the venom gland.

The protein localises to the secreted. This chain is U-scoloptoxin(13)-Sm1a, found in Scolopendra morsitans (Tanzanian blue ringleg centipede).